The sequence spans 354 residues: MRVTDFSFELPDSLIAHYPQPERSRCRLLSLEGPTGALTHGTFTDLLDKLNPGDLLVFNNTRVIPARLFGRKASGGKIEVLVERMLDDKRILAHIRASKAPKPGTELLLGDDESIHATMTARHGALFEVEFNDPRPVLDILNAIGHMPLPPYIDRPDEDADRELYQTVYSEKPGAVAAPTAGLHFDEPLLAALREKGVEMAFVTLHVGAGTFQPVRVDTIEDHIMHSEYAEVPQEVVDAVLAAKARGNRVIAVGTTSVRSLESAAQAAKSDLIEPFFGDTQIFIYPGYQYKVIDALITNFHLPESTLIMLVSAFAGYQHTMNAYKTAVEQKYRFFSYGDAMFITYNPQAISERP.

Belongs to the QueA family. In terms of assembly, monomer.

The protein resides in the cytoplasm. It carries out the reaction 7-aminomethyl-7-carbaguanosine(34) in tRNA + S-adenosyl-L-methionine = epoxyqueuosine(34) in tRNA + adenine + L-methionine + 2 H(+). It participates in tRNA modification; tRNA-queuosine biosynthesis. Its function is as follows. Transfers and isomerizes the ribose moiety from AdoMet to the 7-aminomethyl group of 7-deazaguanine (preQ1-tRNA) to give epoxyqueuosine (oQ-tRNA). This is S-adenosylmethionine:tRNA ribosyltransferase-isomerase from Salmonella paratyphi C (strain RKS4594).